A 54-amino-acid polypeptide reads, in one-letter code: Large ribosomal subunit protein bL32 (54 aa).

It belongs to the bacterial ribosomal protein bL32 family.

The polypeptide is Large ribosomal subunit protein bL32 (Buchnera aphidicola subsp. Baizongia pistaciae (strain Bp)).